The primary structure comprises 235 residues: Endonuclease V (235 aa).

Asp45 and Asp115 together coordinate Mg(2+).

This sequence belongs to the endonuclease V family. Requires Mg(2+) as cofactor.

The protein localises to the cytoplasm. It carries out the reaction Endonucleolytic cleavage at apurinic or apyrimidinic sites to products with a 5'-phosphate.. Functionally, DNA repair enzyme involved in the repair of deaminated bases. Selectively cleaves double-stranded DNA at the second phosphodiester bond 3' to a deoxyinosine leaving behind the intact lesion on the nicked DNA. This Bacillus thuringiensis subsp. konkukian (strain 97-27) protein is Endonuclease V.